The sequence spans 75 residues: Defensin-like protein (75 aa).

An N-terminal signal peptide occupies residues 1-24; that stretch reads MEKKSIAGLCFLFLVLFVAQEVVV. Cystine bridges form between Cys-31-Cys-75, Cys-42-Cys-63, Cys-48-Cys-69, and Cys-52-Cys-71.

The protein belongs to the DEFL family.

The protein resides in the secreted. In terms of biological role, this protein is required for germination. The chain is Defensin-like protein from Vigna unguiculata (Cowpea).